The chain runs to 275 residues: NH(3)-dependent NAD(+) synthetase (275 aa).

Gly50–Ser57 is a binding site for ATP. Asp56 is a Mg(2+) binding site. Position 147 (Arg147) interacts with deamido-NAD(+). Thr167 serves as a coordination point for ATP. Glu172 serves as a coordination point for Mg(2+). Deamido-NAD(+) contacts are provided by Lys180 and Asp187. ATP-binding residues include Lys196 and Thr218. His267–Lys268 contacts deamido-NAD(+).

This sequence belongs to the NAD synthetase family. In terms of assembly, homodimer.

The catalysed reaction is deamido-NAD(+) + NH4(+) + ATP = AMP + diphosphate + NAD(+) + H(+). The protein operates within cofactor biosynthesis; NAD(+) biosynthesis; NAD(+) from deamido-NAD(+) (ammonia route): step 1/1. Functionally, catalyzes the ATP-dependent amidation of deamido-NAD to form NAD. Uses ammonia as a nitrogen source. This chain is NH(3)-dependent NAD(+) synthetase, found in Pseudomonas syringae pv. syringae (strain B728a).